A 468-amino-acid polypeptide reads, in one-letter code: PE family protein PE3 (468 aa).

One can recognise a PE domain in the interval 1-92 (MSYVIAAPEM…AGAAYAQAEA (92 aa)). The region spanning 154 to 375 (PVAQYTPEQW…DLRVLVDLGY (222 aa)) is the PE-PPE domain.

Belongs to the mycobacterial PE family.

The protein resides in the secreted. It localises to the cell wall. Plays significant roles in mycobacterial persistence during infection and modulates host immune response. The chain is PE family protein PE3 from Mycobacterium tuberculosis (strain ATCC 25618 / H37Rv).